We begin with the raw amino-acid sequence, 1038 residues long: Translation initiation factor IF-2 (1038 aa).

Disordered stretches follow at residues 39–346 (TISE…KWQE) and 403–451 (KPKA…PEKV). Residues 103–125 (RNTTSNAPEASVANNQIASSEAN) are compositionally biased toward polar residues. Residues 157-176 (PQKPAAPEAEPEAQSQAPAK) show a composition bias toward low complexity. Composition is skewed to basic and acidic residues over residues 178 to 197 (AVEKPEKSAQPRPGKPERQP) and 226 to 243 (PILKRDRPRREDERDQAK). Positions 407–423 (ARAATAATAAPISSPTT) are enriched in low complexity. Over residues 431–450 (NNRDQNRRQETEVKRERPEK) the composition is skewed to basic and acidic residues. In terms of domain architecture, tr-type G spans 532–705 (RRPPVVTIMG…LLVAEVGELS (174 aa)). Residues 541-548 (GHVDHGKT) form a G1 region. Position 541 to 548 (541 to 548 (GHVDHGKT)) interacts with GTP. Residues 566 to 570 (GITQH) form a G2 region. A G3 region spans residues 591–594 (DTPG). GTP is bound by residues 591–595 (DTPGH) and 645–648 (NKID). Positions 645 to 648 (NKID) are G4. Residues 681 to 683 (SAI) are G5.

It belongs to the TRAFAC class translation factor GTPase superfamily. Classic translation factor GTPase family. IF-2 subfamily.

The protein resides in the cytoplasm. In terms of biological role, one of the essential components for the initiation of protein synthesis. Protects formylmethionyl-tRNA from spontaneous hydrolysis and promotes its binding to the 30S ribosomal subunits. Also involved in the hydrolysis of GTP during the formation of the 70S ribosomal complex. The chain is Translation initiation factor IF-2 from Trichormus variabilis (strain ATCC 29413 / PCC 7937) (Anabaena variabilis).